Consider the following 296-residue polypeptide: Ribonuclease HIII (296 aa).

Residues 80–296 (LALIGSDEVG…NTKKAYQRLK (217 aa)) enclose the RNase H type-2 domain. Residues D86, E87, and D191 each coordinate a divalent metal cation.

Belongs to the RNase HII family. RnhC subfamily. Mn(2+) is required as a cofactor. Mg(2+) serves as cofactor.

The protein localises to the cytoplasm. The catalysed reaction is Endonucleolytic cleavage to 5'-phosphomonoester.. Functionally, endonuclease that specifically degrades the RNA of RNA-DNA hybrids. This chain is Ribonuclease HIII, found in Streptococcus thermophilus (strain ATCC BAA-491 / LMD-9).